We begin with the raw amino-acid sequence, 128 residues long: Fumarate reductase subunit C (128 aa).

3 helical membrane passes run 31–51, 67–87, and 106–126; these read ATCI…ISLG, VVIL…TLYV, and ILKN…LVLV.

It belongs to the FrdC family. In terms of assembly, part of an enzyme complex containing four subunits: a flavoprotein (FrdA), an iron-sulfur protein (FrdB), and two hydrophobic anchor proteins (FrdC and FrdD).

It is found in the cell inner membrane. In terms of biological role, anchors the catalytic components of the fumarate reductase complex to the cell membrane, binds quinones. The polypeptide is Fumarate reductase subunit C (Haemophilus ducreyi (strain 35000HP / ATCC 700724)).